Here is a 91-residue protein sequence, read N- to C-terminus: MGRSLKKGPFIADSLLKKVEKQNTDNDKSVIKTWSRSSTILPVMIGHTIAVHNGKAHIPVFITEQMIGHKLGEFAPTRTYRGHLRDKKGAR.

Belongs to the universal ribosomal protein uS19 family.

Functionally, protein S19 forms a complex with S13 that binds strongly to the 16S ribosomal RNA. This is Small ribosomal subunit protein uS19 from Prochlorococcus marinus subsp. pastoris (strain CCMP1986 / NIES-2087 / MED4).